A 411-amino-acid chain; its full sequence is Glucose-1-phosphate adenylyltransferase (411 aa).

Residues glycine 162, 177–178 (EK), and serine 195 contribute to the alpha-D-glucose 1-phosphate site.

It belongs to the bacterial/plant glucose-1-phosphate adenylyltransferase family. In terms of assembly, homotetramer.

The catalysed reaction is alpha-D-glucose 1-phosphate + ATP + H(+) = ADP-alpha-D-glucose + diphosphate. Its pathway is glycan biosynthesis; glycogen biosynthesis. Functionally, involved in the biosynthesis of ADP-glucose, a building block required for the elongation reactions to produce glycogen. Catalyzes the reaction between ATP and alpha-D-glucose 1-phosphate (G1P) to produce pyrophosphate and ADP-Glc. In Thermodesulfovibrio yellowstonii (strain ATCC 51303 / DSM 11347 / YP87), this protein is Glucose-1-phosphate adenylyltransferase.